The chain runs to 429 residues: D-amino acid dehydrogenase (429 aa).

3-17 contacts FAD; the sequence is VLILGSGVIGTTTAW.

This sequence belongs to the DadA oxidoreductase family. It depends on FAD as a cofactor.

It catalyses the reaction a D-alpha-amino acid + A + H2O = a 2-oxocarboxylate + AH2 + NH4(+). The protein operates within amino-acid degradation; D-alanine degradation; NH(3) and pyruvate from D-alanine: step 1/1. Its function is as follows. Oxidative deamination of D-amino acids. This Xanthomonas campestris pv. campestris (strain B100) protein is D-amino acid dehydrogenase.